A 364-amino-acid polypeptide reads, in one-letter code: MSHTTHPYQKELEVATLAVKRASLLTKQLSDSIVQTARSGTLTKDDKSPVTIGDFALQAIINHAIKLNFPSDEIVGEEDSQELQENSSLADQVLSLIIKIQQETSVYNDVVGTLTDKNKVFQSIDYGNSQGGLKGRFWALDPIDGTKGFLRGDQFAVCLALIEDGKVVLGVIGCPNLLENIVSNEEHSGVVGGLYSAVKGVGSFYSELFKEGAEPLSQQKPIKMQNHTNPSQLKVVEGVEKGHSSHSTQAEIKAKLGFDPTTVAKQTVNLDSQVKYCVLASGQADIYLRLPVSDTYREKIWDHAAGNILIYESGGQVGDVTGAPLNFGNGRTLDSKGVIAANKEIFDKVIDAVTEIRKSSTPRV.

Residue Asp54 is the Proton acceptor of the active site. Mg(2+) contacts are provided by Glu77, Asp141, Ile143, and Asp144. The Proton acceptor role is filled by Thr146. Residues Thr146, His243, Ser272, Lys275, Arg289, and Asp302 each contribute to the adenosine 3',5'-bisphosphate site. AMP-binding residues include His243, Ser272, Lys275, Arg289, and Asp302. Asp302 is a binding site for Mg(2+).

Belongs to the inositol monophosphatase superfamily. Mg(2+) serves as cofactor.

The catalysed reaction is 3'-phosphoadenylyl sulfate + H2O = adenosine 5'-phosphosulfate + phosphate. It catalyses the reaction adenosine 3',5'-bisphosphate + H2O = AMP + phosphate. The enzyme catalyses adenosine 2',5'-bisphosphate + H2O = AMP + phosphate. Phosphatase that converts adenosine 3'-phosphate 5'-phosphosulfate (PAPS) to adenosine 5'-phosphosulfate (APS) and 3'(2')-phosphoadenosine 5'-phosphate (PAP) to AMP. Regulates the flux of sulfur in the sulfur-activation pathway by converting PAPS to APS. Involved in salt tolerance. The chain is 3'(2'),5'-bisphosphate nucleotidase 1 (HAL21) from Candida albicans (strain WO-1) (Yeast).